We begin with the raw amino-acid sequence, 309 residues long: uncharacterized protein (309 aa).

Solcar repeat units follow at residues 6 to 83 (SDLY…LCHS), 97 to 211 (LTGY…FKRL), and 216 to 302 (NDKA…VSLL). 6 helical membrane-spanning segments follow: residues 12 to 32 (ITAG…FEYL), 47 to 67 (IILP…VAAF), 100 to 120 (YNLL…IIPF), 184 to 204 (VQGT…QFTA), 222 to 242 (VITG…IDVV), and 285 to 305 (VGIS…LLGF).

This sequence belongs to the mitochondrial carrier (TC 2.A.29) family.

It is found in the mitochondrion inner membrane. This is an uncharacterized protein from Saccharomyces cerevisiae (strain ATCC 204508 / S288c) (Baker's yeast).